Reading from the N-terminus, the 359-residue chain is Putative transposase y4uE (359 aa).

Disordered stretches follow at residues 1 to 31 (MGDGPNWRSLPEPSRFVGSDPSPPVPRAPGG) and 318 to 359 (HYAH…EEAA).

The protein belongs to the transposase 9 family.

The chain is Putative transposase y4uE from Sinorhizobium fredii (strain NBRC 101917 / NGR234).